The sequence spans 46 residues: Cuticle protein 4.9 (46 aa).

Functionally, component of the cuticle of migratory locust which contains more than 100 different structural proteins. The sequence is that of Cuticle protein 4.9 from Locusta migratoria (Migratory locust).